A 394-amino-acid polypeptide reads, in one-letter code: Elongation factor Tu 1 (394 aa).

Residues 10 to 204 (KPHVNVGTIG…ALDSYIPEPE (195 aa)) form the tr-type G domain. Positions 19 to 26 (GHVDHGKT) are G1. A GTP-binding site is contributed by 19 to 26 (GHVDHGKT). Mg(2+) is bound at residue Thr-26. Residues 60-64 (GITIN) are G2. Residues 81–84 (DCPG) are G3. GTP contacts are provided by residues 81-85 (DCPGH) and 136-139 (NKCD). Residues 136 to 139 (NKCD) form a G4 region. A G5 region spans residues 174-176 (SAL).

It belongs to the TRAFAC class translation factor GTPase superfamily. Classic translation factor GTPase family. EF-Tu/EF-1A subfamily. As to quaternary structure, monomer.

The protein localises to the cytoplasm. The enzyme catalyses GTP + H2O = GDP + phosphate + H(+). In terms of biological role, GTP hydrolase that promotes the GTP-dependent binding of aminoacyl-tRNA to the A-site of ribosomes during protein biosynthesis. The sequence is that of Elongation factor Tu 1 from Shewanella oneidensis (strain ATCC 700550 / JCM 31522 / CIP 106686 / LMG 19005 / NCIMB 14063 / MR-1).